The primary structure comprises 458 residues: Bone morphogenetic protein 3 (458 aa).

The N-terminal stretch at 1 to 23 (MAECRPWLVLWVGCCGCLCLALG) is a signal peptide. The propeptide occupies 24–348 (ELLNDGLLAV…EQTLKKARRK (325 aa)). N107 carries an N-linked (GlcNAc...) asparagine glycan. Disordered regions lie at residues 244–275 (DSVVSSLHGPHTPLALKPNRKTEKAEQRKKRS) and 303–335 (ERKPYKNLQGRQNEKDKNKKKLRKGSRQKSQTL). Residues 320-329 (NKKKLRKGSR) are compositionally biased toward basic residues. 3 cysteine pairs are disulfide-bonded: C356-C423, C385-C455, and C389-C457. The N-linked (GlcNAc...) asparagine glycan is linked to N449.

The protein belongs to the TGF-beta family. As to quaternary structure, homodimer. Can form heterodimers with ADMP, BMP-2-I and/or BMP-2-II, and DERRIERE.

It is found in the secreted. Its function is as follows. Dorsalizing factor. Antagonizes mesoderm formation by ventralizing BMPs. The sequence is that of Bone morphogenetic protein 3 (bmp3) from Xenopus laevis (African clawed frog).